We begin with the raw amino-acid sequence, 65 residues long: Large ribosomal subunit protein uL30 (65 aa).

It belongs to the universal ribosomal protein uL30 family. Part of the 50S ribosomal subunit.

The protein is Large ribosomal subunit protein uL30 of Methylobacillus flagellatus (strain ATCC 51484 / DSM 6875 / VKM B-1610 / KT).